The chain runs to 145 residues: MSQKAIKGYINLIIPAGGATPAPPIGPALGQRKVNIKTFCDEFNNSTKDMDKGVPLPTLITVYEDSSFSFKIKTPPASYFLKKYAKITKGSSATKKEAVVGKVTMDDCREIAKLKMPDLNTKDIEAATKIICGSAASMGLEVVGN.

Belongs to the universal ribosomal protein uL11 family. As to quaternary structure, part of the ribosomal stalk of the 50S ribosomal subunit. Interacts with L10 and the large rRNA to form the base of the stalk. L10 forms an elongated spine to which L12 dimers bind in a sequential fashion forming a multimeric L10(L12)X complex. In terms of processing, one or more lysine residues are methylated.

Its function is as follows. Forms part of the ribosomal stalk which helps the ribosome interact with GTP-bound translation factors. The polypeptide is Large ribosomal subunit protein uL11 (Rickettsia akari (strain Hartford)).